We begin with the raw amino-acid sequence, 343 residues long: Protein rax1 (343 aa).

Topologically, residues 1-235 (MASAPRVSEV…NLNPLTCTGR (235 aa)) are cytoplasmic. The RGS domain maps to 109-228 (ELSNEQTINS…LNHKFKHNLN (120 aa)). The chain crosses the membrane as a helical span at residues 236–256 (FIIGYVSTFAAYWLGFCGIFL). Residues 257–263 (DYSRRKR) are Extracellular-facing. A helical transmembrane segment spans residues 264–284 (VWTLLPFAFGFYNLICTWSKH). At 285-317 (DPVLALLGYSEVKPFHYEKVLQPSIRLSLNRRA) the chain is on the cytoplasmic side. A helical membrane pass occupies residues 318 to 338 (IFVLSIIVLIVGANTAIFSCV). Residues 339–343 (PSIRL) are Extracellular-facing.

The protein localises to the cell membrane. Its subcellular location is the endoplasmic reticulum membrane. In terms of biological role, may be involved in cell polarization and division. The polypeptide is Protein rax1 (rax1) (Schizosaccharomyces pombe (strain 972 / ATCC 24843) (Fission yeast)).